The primary structure comprises 341 residues: Endoglucanase 1 (341 aa).

The signal sequence occupies residues 1-16; the sequence is MKTATLLAALSVLAGA. Residues 17–30 constitute a propeptide that is removed on maturation; the sequence is LAAPLAGDSALHRR. Glutamate 166 serves as the catalytic Proton donor. Glutamate 275 functions as the Nucleophile in the catalytic mechanism.

Belongs to the glycosyl hydrolase 5 (cellulase A) family.

The enzyme catalyses Endohydrolysis of (1-&gt;4)-beta-D-glucosidic linkages in cellulose, lichenin and cereal beta-D-glucans.. Functionally, has endoglucanase activity on carboxymethyl-cellulose (CMC). The sequence is that of Endoglucanase 1 (CMC1) from Saitozyma flava (Cryptococcus flavus).